We begin with the raw amino-acid sequence, 514 residues long: Na(+)/H(+) antiporter NhaB (514 aa).

The next 12 membrane-spanning stretches (helical) occupy residues 23 to 43, 63 to 83, 97 to 117, 120 to 140, 144 to 164, 202 to 222, 238 to 258, 303 to 323, 357 to 377, 391 to 411, 447 to 467, and 475 to 495; these read LALI…PFVA, PLLP…TSAA, LLLM…LFIF, LLLS…AAAF, FLDA…FYGI, LMMH…VGEP, FFLR…FTCV, AIIG…VGLI, LTVF…APII, LFYL…VGTI, ATPN…APLI, and VWMA…CVEF.

Belongs to the NhaB Na(+)/H(+) (TC 2.A.34) antiporter family.

The protein resides in the cell inner membrane. The catalysed reaction is 2 Na(+)(in) + 3 H(+)(out) = 2 Na(+)(out) + 3 H(+)(in). Its function is as follows. Na(+)/H(+) antiporter that extrudes sodium in exchange for external protons. This Citrobacter koseri (strain ATCC BAA-895 / CDC 4225-83 / SGSC4696) protein is Na(+)/H(+) antiporter NhaB.